The sequence spans 295 residues: Dipeptide transport system permease protein DppC (295 aa).

The next 7 membrane-spanning stretches (helical) occupy residues Ala-27–Ile-47, Val-97–Ile-117, Leu-132–Leu-152, Leu-156–Ala-178, Met-202–Ile-222, Ile-226–Leu-246, and Trp-262–Gly-282. An ABC transmembrane type-1 domain is found at Thr-93–Gly-282.

The protein belongs to the binding-protein-dependent transport system permease family. OppBC subfamily.

It localises to the cell inner membrane. Part of the ABC transporter DppBCDF involved in dipeptide transport. Responsible for the translocation of the substrate across the membrane. The protein is Dipeptide transport system permease protein DppC (dppC) of Haemophilus influenzae (strain ATCC 51907 / DSM 11121 / KW20 / Rd).